The primary structure comprises 119 residues: Large ribosomal subunit protein bL19 (119 aa).

It belongs to the bacterial ribosomal protein bL19 family.

Functionally, this protein is located at the 30S-50S ribosomal subunit interface and may play a role in the structure and function of the aminoacyl-tRNA binding site. This Leuconostoc mesenteroides subsp. mesenteroides (strain ATCC 8293 / DSM 20343 / BCRC 11652 / CCM 1803 / JCM 6124 / NCDO 523 / NBRC 100496 / NCIMB 8023 / NCTC 12954 / NRRL B-1118 / 37Y) protein is Large ribosomal subunit protein bL19.